We begin with the raw amino-acid sequence, 57 residues long: UPF0391 membrane protein RPD_3366 (57 aa).

The next 2 helical transmembrane spans lie at 4-24 (WVVTFLVVALIAGILGFGGIA) and 30-50 (IAKVIFFIAVVLFLISAVVGL).

This sequence belongs to the UPF0391 family.

Its subcellular location is the cell membrane. This Rhodopseudomonas palustris (strain BisB5) protein is UPF0391 membrane protein RPD_3366.